We begin with the raw amino-acid sequence, 355 residues long: tRNA N6-adenosine threonylcarbamoyltransferase (355 aa).

H110 and H114 together coordinate Fe cation. Residues 132-136 (LVSGG), D165, G178, D182, and N288 each bind substrate. D316 is a binding site for Fe cation.

This sequence belongs to the KAE1 / TsaD family. Fe(2+) serves as cofactor.

It localises to the cytoplasm. It carries out the reaction L-threonylcarbamoyladenylate + adenosine(37) in tRNA = N(6)-L-threonylcarbamoyladenosine(37) in tRNA + AMP + H(+). Functionally, required for the formation of a threonylcarbamoyl group on adenosine at position 37 (t(6)A37) in tRNAs that read codons beginning with adenine. Is involved in the transfer of the threonylcarbamoyl moiety of threonylcarbamoyl-AMP (TC-AMP) to the N6 group of A37, together with TsaE and TsaB. TsaD likely plays a direct catalytic role in this reaction. This is tRNA N6-adenosine threonylcarbamoyltransferase from Lawsonia intracellularis (strain PHE/MN1-00).